Here is a 466-residue protein sequence, read N- to C-terminus: Argininosuccinate lyase 1 (466 aa).

This sequence belongs to the lyase 1 family. Argininosuccinate lyase subfamily.

The protein resides in the cytoplasm. The enzyme catalyses 2-(N(omega)-L-arginino)succinate = fumarate + L-arginine. The protein operates within amino-acid biosynthesis; L-arginine biosynthesis; L-arginine from L-ornithine and carbamoyl phosphate: step 3/3. This chain is Argininosuccinate lyase 1, found in Agrobacterium fabrum (strain C58 / ATCC 33970) (Agrobacterium tumefaciens (strain C58)).